Here is a 504-residue protein sequence, read N- to C-terminus: Arabinose import ATP-binding protein AraG (504 aa).

2 consecutive ABC transporter domains span residues 8-243 (LSFR…MVGR) and 256-499 (YGEE…MPKV). 40-47 (GENGAGKS) contributes to the ATP binding site.

It belongs to the ABC transporter superfamily. Arabinose importer (TC 3.A.1.2.2) family. As to quaternary structure, the complex is composed of two ATP-binding proteins (AraG), two transmembrane proteins (AraH) and a solute-binding protein (AraF).

It localises to the cell inner membrane. The enzyme catalyses L-arabinose(out) + ATP + H2O = L-arabinose(in) + ADP + phosphate + H(+). Its function is as follows. Part of the ABC transporter complex AraFGH involved in arabinose import. Responsible for energy coupling to the transport system. This is Arabinose import ATP-binding protein AraG from Shigella dysenteriae serotype 1 (strain Sd197).